Reading from the N-terminus, the 342-residue chain is Ketol-acid reductoisomerase (NADP(+)) (342 aa).

The 180-residue stretch at 2-181 (VKVYYNGDIK…GGARAGVLET (180 aa)) folds into the KARI N-terminal Rossmann domain. NADP(+) is bound by residues 25-28 (YGSQ), arginine 48, serine 52, and 82-85 (DEQQ). Histidine 107 is an active-site residue. Glycine 133 provides a ligand contact to NADP(+). A KARI C-terminal knotted domain is found at 182-327 (TFKEETETDL…RQLREMMPFV (146 aa)). Residues aspartate 190, glutamate 194, glutamate 226, and glutamate 230 each contribute to the Mg(2+) site. Serine 251 serves as a coordination point for substrate.

It belongs to the ketol-acid reductoisomerase family. Requires Mg(2+) as cofactor.

The enzyme catalyses (2R)-2,3-dihydroxy-3-methylbutanoate + NADP(+) = (2S)-2-acetolactate + NADPH + H(+). It carries out the reaction (2R,3R)-2,3-dihydroxy-3-methylpentanoate + NADP(+) = (S)-2-ethyl-2-hydroxy-3-oxobutanoate + NADPH + H(+). It participates in amino-acid biosynthesis; L-isoleucine biosynthesis; L-isoleucine from 2-oxobutanoate: step 2/4. Its pathway is amino-acid biosynthesis; L-valine biosynthesis; L-valine from pyruvate: step 2/4. Its function is as follows. Involved in the biosynthesis of branched-chain amino acids (BCAA). Catalyzes an alkyl-migration followed by a ketol-acid reduction of (S)-2-acetolactate (S2AL) to yield (R)-2,3-dihydroxy-isovalerate. In the isomerase reaction, S2AL is rearranged via a Mg-dependent methyl migration to produce 3-hydroxy-3-methyl-2-ketobutyrate (HMKB). In the reductase reaction, this 2-ketoacid undergoes a metal-dependent reduction by NADPH to yield (R)-2,3-dihydroxy-isovalerate. This chain is Ketol-acid reductoisomerase (NADP(+)), found in Bacillus velezensis (strain DSM 23117 / BGSC 10A6 / LMG 26770 / FZB42) (Bacillus amyloliquefaciens subsp. plantarum).